A 301-amino-acid polypeptide reads, in one-letter code: Uricase-2 isozyme 2 (301 aa).

Residues lysine 17 and threonine 63 each act as charge relay system in the active site. Residues threonine 63, aspartate 64, phenylalanine 165, arginine 182, valine 237, glutamine 238, and asparagine 257 each contribute to the urate site. Residue histidine 259 is the Charge relay system of the active site. Positions 299 to 301 (SKL) match the Microbody targeting signal motif.

It belongs to the uricase family.

The protein resides in the peroxisome. It carries out the reaction urate + O2 + H2O = 5-hydroxyisourate + H2O2. It participates in purine metabolism; urate degradation; (S)-allantoin from urate: step 1/3. In terms of biological role, catalyzes the oxidation of uric acid to 5-hydroxyisourate, which is further processed to form (S)-allantoin. In Canavalia lineata (Beach bean), this protein is Uricase-2 isozyme 2.